Here is a 261-residue protein sequence, read N- to C-terminus: Rhomboid-type serine protease 2 (261 aa).

5 helical membrane passes run 17–37 (LTAG…VFPI), 58–78 (LYPL…SLFV), 94–114 (ITLN…GMLL), 116–136 (PNVY…YFAV), and 155–175 (LYIP…SSFV). The active-site Nucleophile is the serine 124. Histidine 177 is a catalytic residue.

The protein belongs to the peptidase S54 family.

The protein resides in the golgi apparatus membrane. The protein localises to the golgi apparatus. Its subcellular location is the cis-Golgi network membrane. It catalyses the reaction Cleaves type-1 transmembrane domains using a catalytic dyad composed of serine and histidine that are contributed by different transmembrane domains.. Functionally, probable rhomboid-type serine protease that catalyzes intramembrane proteolysis. This chain is Rhomboid-type serine protease 2 (RBD2), found in Eremothecium gossypii (strain ATCC 10895 / CBS 109.51 / FGSC 9923 / NRRL Y-1056) (Yeast).